The chain runs to 171 residues: Secreted LysM effector Blys4 (171 aa).

Residues Lys125–Leu169 enclose the LysM domain.

It belongs to the secreted LysM effector family.

In terms of biological role, might have a role in sequestration of chitin oligosaccharides (breakdown products of fungal cell walls that are released during invasion and act as triggers of host immunity) to dampen host defense. In Beauveria bassiana (strain ARSEF 2860) (White muscardine disease fungus), this protein is Secreted LysM effector Blys4.